The following is a 76-amino-acid chain: MPHIDVKFFPRDLSDAQQQALADELTQVIVKHLQSKESSVSVALKEVQPEQWKSEVWDTEIAPQLDTLARKPGYEM.

Pro-2 functions as the Proton acceptor; via imino nitrogen in the catalytic mechanism.

The protein belongs to the 4-oxalocrotonate tautomerase family. PptA subfamily. As to quaternary structure, homodimer.

It localises to the cytoplasm. This chain is Tautomerase PptA, found in Cronobacter sakazakii (strain ATCC BAA-894) (Enterobacter sakazakii).